A 194-amino-acid chain; its full sequence is Imidazoleglycerol-phosphate dehydratase (194 aa).

The protein belongs to the imidazoleglycerol-phosphate dehydratase family.

Its subcellular location is the cytoplasm. It carries out the reaction D-erythro-1-(imidazol-4-yl)glycerol 3-phosphate = 3-(imidazol-4-yl)-2-oxopropyl phosphate + H2O. Its pathway is amino-acid biosynthesis; L-histidine biosynthesis; L-histidine from 5-phospho-alpha-D-ribose 1-diphosphate: step 6/9. The sequence is that of Imidazoleglycerol-phosphate dehydratase from Lacticaseibacillus casei (strain BL23) (Lactobacillus casei).